Consider the following 304-residue polypeptide: Aspartate carbamoyltransferase catalytic subunit (304 aa).

The carbamoyl phosphate site is built by Arg-55 and Thr-56. Lys-84 provides a ligand contact to L-aspartate. Residues Arg-105, His-133, and Gln-136 each contribute to the carbamoyl phosphate site. The L-aspartate site is built by Arg-165 and Arg-226. Positions 265 and 266 each coordinate carbamoyl phosphate.

Belongs to the aspartate/ornithine carbamoyltransferase superfamily. ATCase family. Heterooligomer of catalytic and regulatory chains.

The catalysed reaction is carbamoyl phosphate + L-aspartate = N-carbamoyl-L-aspartate + phosphate + H(+). The protein operates within pyrimidine metabolism; UMP biosynthesis via de novo pathway; (S)-dihydroorotate from bicarbonate: step 2/3. Its function is as follows. Catalyzes the condensation of carbamoyl phosphate and aspartate to form carbamoyl aspartate and inorganic phosphate, the committed step in the de novo pyrimidine nucleotide biosynthesis pathway. This chain is Aspartate carbamoyltransferase catalytic subunit, found in Methanothrix thermoacetophila (strain DSM 6194 / JCM 14653 / NBRC 101360 / PT) (Methanosaeta thermophila).